A 186-amino-acid polypeptide reads, in one-letter code: Akirin-1A (186 aa).

Residues 14–65 form a disordered region; sequence EALMSPQSPKRRRCAPLPGSPATPSPQRCAIRPEMQQGQQQPLSQLGGDRRL. The segment covering 49-60 has biased composition (low complexity); that stretch reads QQGQQQPLSQLG. The short motif at 183-186 is the SYVS motif element; sequence SYVS.

It belongs to the akirin family.

Its subcellular location is the nucleus. In terms of biological role, molecular adapter that acts as a bridge between proteins, and which is involved skeletal muscle development. Functions as a signal transducer for MSTN during skeletal muscle regeneration and myogenesis. The sequence is that of Akirin-1A (akirin1-a) from Xenopus laevis (African clawed frog).